The primary structure comprises 241 residues: tRNA (guanine-N(7)-)-methyltransferase (241 aa).

The segment covering 1-10 (MTESNETPNT) has biased composition (polar residues). Positions 1 to 21 (MTESNETPNTPEAGDESKHRR) are disordered. The S-adenosyl-L-methionine site is built by glutamate 71, glutamate 96, aspartate 123, and aspartate 146. Aspartate 146 is an active-site residue. Substrate contacts are provided by residues lysine 150, aspartate 182, and 219–222 (TKFE).

Belongs to the class I-like SAM-binding methyltransferase superfamily. TrmB family.

The catalysed reaction is guanosine(46) in tRNA + S-adenosyl-L-methionine = N(7)-methylguanosine(46) in tRNA + S-adenosyl-L-homocysteine. It functions in the pathway tRNA modification; N(7)-methylguanine-tRNA biosynthesis. Catalyzes the formation of N(7)-methylguanine at position 46 (m7G46) in tRNA. The chain is tRNA (guanine-N(7)-)-methyltransferase from Pseudomonas fluorescens (strain SBW25).